The chain runs to 382 residues: Probable protein phosphatase 2C 65 (382 aa).

Residues 47–337 (HVSMSIKQGK…DDCAVVVLYL (291 aa)) form the PPM-type phosphatase domain. 2 residues coordinate Mn(2+): Asp83 and Gly84. Residues 107–126 (KIRSSKSAGDENIENNSSQS) are disordered. Residues Asp282 and Asp328 each coordinate Mn(2+).

Belongs to the PP2C family. The cofactor is Mg(2+). Mn(2+) serves as cofactor.

The enzyme catalyses O-phospho-L-seryl-[protein] + H2O = L-seryl-[protein] + phosphate. It carries out the reaction O-phospho-L-threonyl-[protein] + H2O = L-threonyl-[protein] + phosphate. The protein is Probable protein phosphatase 2C 65 of Arabidopsis thaliana (Mouse-ear cress).